The sequence spans 155 residues: Large ribosomal subunit protein uL15 (155 aa).

The span at 1–13 (MKLNELRDCEGAT) shows a compositional bias: basic and acidic residues. A disordered region spans residues 1-47 (MKLNELRDCEGATKNRKRIGRGIGSGTGKTGGRGVKGQKSRSGVSLN). The span at 21-35 (RGIGSGTGKTGGRGV) shows a compositional bias: gly residues.

The protein belongs to the universal ribosomal protein uL15 family. Part of the 50S ribosomal subunit.

Functionally, binds to the 23S rRNA. This Bartonella tribocorum (strain CIP 105476 / IBS 506) protein is Large ribosomal subunit protein uL15.